The following is a 952-amino-acid chain: Glycine dehydrogenase (decarboxylating) (952 aa).

Lys-696 carries the post-translational modification N6-(pyridoxal phosphate)lysine.

Belongs to the GcvP family. The glycine cleavage system is composed of four proteins: P, T, L and H. It depends on pyridoxal 5'-phosphate as a cofactor.

The catalysed reaction is N(6)-[(R)-lipoyl]-L-lysyl-[glycine-cleavage complex H protein] + glycine + H(+) = N(6)-[(R)-S(8)-aminomethyldihydrolipoyl]-L-lysyl-[glycine-cleavage complex H protein] + CO2. Its function is as follows. The glycine cleavage system catalyzes the degradation of glycine. The P protein binds the alpha-amino group of glycine through its pyridoxal phosphate cofactor; CO(2) is released and the remaining methylamine moiety is then transferred to the lipoamide cofactor of the H protein. This is Glycine dehydrogenase (decarboxylating) from Pelagibacter ubique (strain HTCC1062).